Here is a 457-residue protein sequence, read N- to C-terminus: Cell division protein FtsZ (457 aa).

GTP contacts are provided by residues 26-30 (GGGGN), 115-117 (GTG), Glu-146, Lys-150, and Asp-193. Residues 429–447 (KKDVVRSEESERPAFESER) show a composition bias toward basic and acidic residues. Positions 429-457 (KKDVVRSEESERPAFESERSSSPTTISFN) are disordered. The segment covering 448–457 (SSSPTTISFN) has biased composition (polar residues).

Belongs to the FtsZ family. In terms of assembly, homodimer. Polymerizes to form a dynamic ring structure in a strictly GTP-dependent manner. Interacts directly with several other division proteins.

It localises to the cytoplasm. In terms of biological role, essential cell division protein that forms a contractile ring structure (Z ring) at the future cell division site. The regulation of the ring assembly controls the timing and the location of cell division. One of the functions of the FtsZ ring is to recruit other cell division proteins to the septum to produce a new cell wall between the dividing cells. Binds GTP and shows GTPase activity. This is Cell division protein FtsZ from Porphyromonas gingivalis (strain ATCC BAA-308 / W83).